The chain runs to 57 residues: UPF0391 membrane protein RPE_2138 (57 aa).

Helical transmembrane passes span 4 to 24 (WVVT…GGIA) and 30 to 50 (IAKI…VIGL).

This sequence belongs to the UPF0391 family.

The protein resides in the cell membrane. This is UPF0391 membrane protein RPE_2138 from Rhodopseudomonas palustris (strain BisA53).